Reading from the N-terminus, the 346-residue chain is MSDNIRVGLIGYGYASKTFHAPLIAGTPGQELAVISSSDETKVKADWPTVTVVSEPKHLFNDPNIDLIVIPTPNDTHFPLAKAALEAGKHVVVDKPFTVTLSQARELDALAKSLGRVLSVFHNRRWDSDFLTLKGLLAEGVLGEVAYFESHFDRFRPQVRDRWREQGGPGSGIWYDLAPHLLDQAITLFGLPVSMTVDLAQLRPGAQSTDYFHAILSYPQRRVILHGTMLAAAESARYIVHGSRGSYVKYGLDPQEERLKNGERLPQEDWGYDMRDGVLTRVEGEERVEETLLTVPGNYPAYYAAIRDALNGDGENPVPASQAIQVMELIELGIESAKHRATLCLA.

The protein belongs to the Gfo/Idh/MocA family.

This is an uncharacterized protein from Escherichia coli (strain K12).